The sequence spans 207 residues: Chloramphenicol acetyltransferase (207 aa).

The active-site Proton acceptor is the His-186.

The protein belongs to the chloramphenicol acetyltransferase family. Homotrimer.

It carries out the reaction chloramphenicol + acetyl-CoA = chloramphenicol 3-acetate + CoA. Its function is as follows. This enzyme is an effector of chloramphenicol resistance in bacteria. The protein is Chloramphenicol acetyltransferase of Campylobacter coli.